The sequence spans 346 residues: Fructose-1,6-bisphosphatase class 1 (346 aa).

Mg(2+) is bound by residues glutamate 96, aspartate 119, leucine 121, and aspartate 122. Substrate-binding positions include 122–125 (DGSS), asparagine 214, tyrosine 247, and lysine 277. Glutamate 283 lines the Mg(2+) pocket.

It belongs to the FBPase class 1 family. Homotetramer. Mg(2+) serves as cofactor.

The protein resides in the cytoplasm. The enzyme catalyses beta-D-fructose 1,6-bisphosphate + H2O = beta-D-fructose 6-phosphate + phosphate. The protein operates within carbohydrate biosynthesis; gluconeogenesis. The protein is Fructose-1,6-bisphosphatase class 1 of Cytophaga hutchinsonii (strain ATCC 33406 / DSM 1761 / CIP 103989 / NBRC 15051 / NCIMB 9469 / D465).